Here is a 199-residue protein sequence, read N- to C-terminus: Elongation factor Ts (199 aa).

The tract at residues 82-85 (TDFV) is involved in Mg(2+) ion dislocation from EF-Tu.

The protein belongs to the EF-Ts family.

It localises to the cytoplasm. Functionally, associates with the EF-Tu.GDP complex and induces the exchange of GDP to GTP. It remains bound to the aminoacyl-tRNA.EF-Tu.GTP complex up to the GTP hydrolysis stage on the ribosome. The sequence is that of Elongation factor Ts from Leptospira interrogans serogroup Icterohaemorrhagiae serovar copenhageni (strain Fiocruz L1-130).